Here is an 82-residue protein sequence, read N- to C-terminus: Three-finger toxin MicTx3 (82 aa).

The N-terminal stretch at 1–21 (MKTLLLTLVVVTIMCLDLGYT) is a signal peptide. Cystine bridges form between Cys-24–Cys-44, Cys-38–Cys-59, Cys-63–Cys-74, and Cys-75–Cys-80.

It belongs to the three-finger toxin family. Short-chain subfamily. Expressed by the venom gland.

Its subcellular location is the secreted. In terms of biological role, has been described to inhibit nicotinic acetylcholine receptor (nAChR) alpha-7/CHRNA7 subunits and to bind acetylcholine binding protein (AChBP) (Kd=29.5 nM). In Micrurus corallinus (Brazilian coral snake), this protein is Three-finger toxin MicTx3.